A 459-amino-acid chain; its full sequence is MPSKTDFTSSTMTPREIVQELDRHIVGQQAAKRSVAIALRNRWRRMQLPEELRNEVMPKNILMIGPTGVGKTEIARRLATLANAPFVKVEATRFTEVGYVGKDVEQIGRDLVDTAVKMYREQAKVRVRTQAEEYAEERILDALLPRRSVGIGFDADADAIRQEPSAHESETRAKFRRMLRSGELEEREIELDVAVNVSMDIMTPPGMEEMGQQLRQMFSNIGGGKSQKRKLAIKAARPLLIEEEAAKLVNEDEIRAAAIEACEQNGIVFIDEIDKVVKRGDTVGGGDVSREGVQRDLLPLVEGSNVSTKYGTIRTNHILFIASGAFHLTKPSDLIPELQGRFPIRVELDALSKADFIRILTEPKAALTKQYQELLKTEGVSLDFTEDAIDRIAEIAYLVNERQENIGARRLHTVLERLLETLSYESPDRDGESVTVDADYVNAHLGELVKDPDLSRYIL.

ATP contacts are provided by residues Val-26, 68-73, Asp-271, Glu-337, and Arg-409; that span reads GVGKTE.

This sequence belongs to the ClpX chaperone family. HslU subfamily. In terms of assembly, a double ring-shaped homohexamer of HslV is capped on each side by a ring-shaped HslU homohexamer. The assembly of the HslU/HslV complex is dependent on binding of ATP.

It is found in the cytoplasm. In terms of biological role, ATPase subunit of a proteasome-like degradation complex; this subunit has chaperone activity. The binding of ATP and its subsequent hydrolysis by HslU are essential for unfolding of protein substrates subsequently hydrolyzed by HslV. HslU recognizes the N-terminal part of its protein substrates and unfolds these before they are guided to HslV for hydrolysis. The polypeptide is ATP-dependent protease ATPase subunit HslU (Xylella fastidiosa (strain M23)).